The chain runs to 285 residues: Lipoyl synthase (285 aa).

[4Fe-4S] cluster contacts are provided by Cys-36, Cys-41, Cys-47, Cys-62, Cys-66, Cys-69, and Ser-275. A Radical SAM core domain is found at 48–264 (FSKKTATFLI…KEYAISIGFK (217 aa)).

Belongs to the radical SAM superfamily. Lipoyl synthase family. Requires [4Fe-4S] cluster as cofactor.

The protein resides in the cytoplasm. It carries out the reaction [[Fe-S] cluster scaffold protein carrying a second [4Fe-4S](2+) cluster] + N(6)-octanoyl-L-lysyl-[protein] + 2 oxidized [2Fe-2S]-[ferredoxin] + 2 S-adenosyl-L-methionine + 4 H(+) = [[Fe-S] cluster scaffold protein] + N(6)-[(R)-dihydrolipoyl]-L-lysyl-[protein] + 4 Fe(3+) + 2 hydrogen sulfide + 2 5'-deoxyadenosine + 2 L-methionine + 2 reduced [2Fe-2S]-[ferredoxin]. It participates in protein modification; protein lipoylation via endogenous pathway; protein N(6)-(lipoyl)lysine from octanoyl-[acyl-carrier-protein]: step 2/2. In terms of biological role, catalyzes the radical-mediated insertion of two sulfur atoms into the C-6 and C-8 positions of the octanoyl moiety bound to the lipoyl domains of lipoate-dependent enzymes, thereby converting the octanoylated domains into lipoylated derivatives. This is Lipoyl synthase from Caldicellulosiruptor saccharolyticus (strain ATCC 43494 / DSM 8903 / Tp8T 6331).